The following is a 441-amino-acid chain: Damage-control phosphatase ARMT1 (441 aa).

N-acetylalanine is present on alanine 2. At lysine 40 the chain carries N6-acetyllysine. Residue serine 102 is modified to Phosphoserine. Mn(2+) is bound by residues aspartate 253 and asparagine 254. 253 to 254 (DN) serves as a coordination point for substrate. S-adenosyl-L-methionine is bound by residues glutamate 258 and aspartate 291. Position 291 (aspartate 291) interacts with Mn(2+). Substrate contacts are provided by residues 367–371 (DLNYR) and lysine 404. A Subfamily III RTxK motif motif is present at residues 401-404 (RTLK).

The protein belongs to the damage-control phosphatase family. Sugar phosphate phosphatase III subfamily. It depends on Mn(2+) as a cofactor. Ni(2+) serves as cofactor. In terms of processing, automethylated.

It carries out the reaction beta-D-fructose 1-phosphate + H2O = D-fructose + phosphate. It catalyses the reaction beta-D-fructose 6-phosphate = dihydroxyacetone + D-glyceraldehyde 3-phosphate. The catalysed reaction is L-glutamyl-[protein] + S-adenosyl-L-methionine = [protein]-L-glutamate 5-O-methyl ester + S-adenosyl-L-homocysteine. Its function is as follows. Metal-dependent phosphatase that shows phosphatase activity against several substrates, including fructose-1-phosphate and fructose-6-phosphate. Its preference for fructose-1-phosphate, a strong glycating agent that causes DNA damage rather than a canonical yeast metabolite, suggests a damage-control function in hexose phosphate metabolism. Has also been shown to have O-methyltransferase activity that methylates glutamate residues of target proteins to form gamma-glutamyl methyl ester residues. Possibly methylates PCNA, suggesting it is involved in the DNA damage response. This Homo sapiens (Human) protein is Damage-control phosphatase ARMT1.